Reading from the N-terminus, the 178-residue chain is Sec-independent protein translocase protein TatB (178 aa).

A helical transmembrane segment spans residues 1 to 21 (MFDIGWSELVVIAVVALIAIG). Over residues 77–86 (TSGNLMTKLT) the composition is skewed to polar residues. Residues 77–178 (TSGNLMTKLT…HEAVKDAKAS (102 aa)) are disordered. The span at 93–102 (PKLEDLDKPA) shows a compositional bias: basic and acidic residues. A compositionally biased stretch (low complexity) spans 155-165 (HATPEPAPATH). The span at 166–178 (ETPHEAVKDAKAS) shows a compositional bias: basic and acidic residues.

Belongs to the TatB family. As to quaternary structure, the Tat system comprises two distinct complexes: a TatABC complex, containing multiple copies of TatA, TatB and TatC subunits, and a separate TatA complex, containing only TatA subunits. Substrates initially bind to the TatABC complex, which probably triggers association of the separate TatA complex to form the active translocon.

It is found in the cell inner membrane. Functionally, part of the twin-arginine translocation (Tat) system that transports large folded proteins containing a characteristic twin-arginine motif in their signal peptide across membranes. Together with TatC, TatB is part of a receptor directly interacting with Tat signal peptides. TatB may form an oligomeric binding site that transiently accommodates folded Tat precursor proteins before their translocation. The chain is Sec-independent protein translocase protein TatB from Nitrobacter hamburgensis (strain DSM 10229 / NCIMB 13809 / X14).